Reading from the N-terminus, the 600-residue chain is Zinc finger and BTB domain-containing protein 46 (600 aa).

The region spanning 31-99 is the BTB domain; sequence CDACVVVEGK…MYSAHLALTS (69 aa). The interval 173–222 is disordered; it reads RRTSPANSSGDSAIASCHEGGSSYGKEDQEPKADGPDDVSSQSLWPGDVG. Residues 197-207 show a composition bias toward basic and acidic residues; sequence GKEDQEPKADG. Residue Lys229 forms a Glycyl lysine isopeptide (Lys-Gly) (interchain with G-Cter in SUMO2) linkage. At Ser234 the chain carries Phosphoserine. Residues 235–278 form a disordered region; the sequence is PSHYGGSELPSSKDTAIQNSLSEQGSGDGWQPTGRRKNRKNKET. Residues 243-259 are compositionally biased toward polar residues; that stretch reads LPSSKDTAIQNSLSEQG. 2 consecutive C2H2-type zinc fingers follow at residues 418 to 436 and 446 to 468; these read FKCP…LKRH and YPCE…TLVH. A disordered region spans residues 513–600; it reads LDHGGGGEGS…EPDKDFAWIS (88 aa). Acidic residues predominate over residues 533 to 555; the sequence is YLEDPDDPRGEAEEELVEDEDED. Basic and acidic residues-rich tracts occupy residues 556-574 and 591-600; these read VAKW…LLGD and EPDKDFAWIS.

In terms of processing, sumoylated. Desumoylation by DESI1 reverses transcriptional repression activity.

Its subcellular location is the nucleus. In terms of biological role, functions as a transcriptional repressor for PRDM1. In Mus musculus (Mouse), this protein is Zinc finger and BTB domain-containing protein 46 (Zbtb46).